The following is a 253-amino-acid chain: Sugar fermentation stimulation protein homolog (253 aa).

This sequence belongs to the SfsA family.

The polypeptide is Sugar fermentation stimulation protein homolog (Prochlorococcus marinus (strain NATL1A)).